A 1442-amino-acid polypeptide reads, in one-letter code: Clustered mitochondria protein homolog (1442 aa).

Disordered regions lie at residues 38–100 and 237–258; these read NYRN…KKPD and GRSE…KDRP. The span at 82-100 shows a compositional bias: basic and acidic residues; the sequence is SEGEQQKDKTAAEDKKKPD. Positions 394-636 constitute a Clu domain; that stretch reads RAEDTFSSKL…RTFPPDVNFL (243 aa). Composition is skewed to basic and acidic residues over residues 696 to 714 and 737 to 763; these read QKQE…EPKA and ESKE…KVET. Disordered regions lie at residues 696–763 and 949–984; these read QKQE…KVET and SESD…SFQC. A compositionally biased stretch (polar residues) spans 949-958; the sequence is SESDALTKSG. TPR repeat units follow at residues 1087-1120, 1213-1246, and 1248-1281; these read AYNF…LNNV, ALLD…NIKY, and GEKS…EKET. A disordered region spans residues 1373–1442; sequence RQKEGGTSEQ…SSNASAQQVS (70 aa). Low complexity predominate over residues 1380 to 1390; sequence SEQAAAAQASQ. A compositionally biased stretch (polar residues) spans 1424–1442; that stretch reads ASSSKQADNSSNASAQQVS.

Belongs to the CLU family.

It localises to the cytoplasm. Functionally, mRNA-binding protein involved in proper cytoplasmic distribution of mitochondria. This is Clustered mitochondria protein homolog from Aedes aegypti (Yellowfever mosquito).